The chain runs to 529 residues: Delayed-rectifier potassium channel regulatory subunit KCNS1 (529 aa).

Residues 1–217 lie on the Cytoplasmic side of the membrane; the sequence is MLMLLVRGTH…LTMENPGYSL (217 aa). Residues 218–239 form a helical membrane-spanning segment; it reads PSKLFSCVSISVVLASIAAMCI. The Extracellular segment spans residues 240-270; that stretch reads HSLPEYQAREAAAAVAAVAAGRSPEGVRDDP. A helical membrane pass occupies residues 271–293; sequence VLRRLEYFCIAWFSFEVSSRLLL. Residues 294-304 lie on the Cytoplasmic side of the membrane; the sequence is APSTRNFFCHP. A helical membrane pass occupies residues 305–322; the sequence is LNLIDIVSVLPFYLTLLA. The Extracellular segment spans residues 323-340; sequence GVALGDQGGTGGKELGHL. A helical; Voltage-sensor membrane pass occupies residues 341–361; that stretch reads GKVVQVFRLMRIFRVLKLARH. Residues 362-376 lie on the Cytoplasmic side of the membrane; sequence STGLRSLGATLKHSY. A helical transmembrane segment spans residues 377 to 398; the sequence is REVGILLLYLAVGVSVFSGVAY. Residues 399 to 411 lie on the Extracellular side of the membrane; it reads TAEKEEDVGFNTI. Residues 412-423 constitute an intramembrane region (helical); it reads PACWWWGTVSMT. Positions 424-429 match the Selectivity filter motif; sequence TVGYGD. Residues 424-431 lie within the membrane without spanning it; that stretch reads TVGYGDVV. Residues 432–438 are Extracellular-facing; the sequence is PVTVAGK. A helical membrane pass occupies residues 439 to 467; the sequence is LAASGCILGGILVVALPITIIFNKFSHFY. Residues 468–529 lie on the Cytoplasmic side of the membrane; sequence RRQKALEAAV…PSEPPHPQMY (62 aa). The tract at residues 494 to 529 is disordered; it reads GVSEASLETSRETSQEGRSADLETQAPSEPPHPQMY. The segment covering 502–514 has biased composition (basic and acidic residues); sequence TSRETSQEGRSAD.

This sequence belongs to the potassium channel family. S (TC 1.A.1.2) subfamily. Kv9.1/KCNS1 sub-subfamily. In terms of assembly, heterotetramer with KCNB1. Heterotetramer with KCNB2. Does not form homomultimers.

The protein localises to the cell membrane. Potassium channel regulatory subunit that modulate the delayed rectifier voltage-gated potassium channel activity of KCNB1 and KCNB2 by altering their kinetics, expression levels, and shifting the half-inactivation potential to more polarized values. While it does not form functional channels on its own, it can form functional heterotetrameric channels with KCNB1 and KCNB2. Each regulatory subunit has unique regulatory properties that can lead to extensive inhibition, significant changes in kinetics, and/or substantial shifts in the voltage dependencies of the inactivation process. This is Delayed-rectifier potassium channel regulatory subunit KCNS1 from Chlorocebus aethiops (Green monkey).